Reading from the N-terminus, the 273-residue chain is HTH-type transcriptional activator RhaS (273 aa).

In terms of domain architecture, HTH araC/xylS-type spans 174-272; that stretch reads YQLLDWLQNN…SQSPRDLRSQ (99 aa). DNA-binding regions (H-T-H motif) lie at residues 191–212 and 239–262; these read PELA…KNKT and VTDI…KREF.

Binds DNA as a dimer.

It localises to the cytoplasm. Functionally, activates expression of the rhaBAD and rhaT operons. The polypeptide is HTH-type transcriptional activator RhaS (Yersinia pestis bv. Antiqua (strain Angola)).